The sequence spans 318 residues: Coproporphyrin III ferrochelatase (318 aa).

The Fe(2+) site is built by His-186 and Glu-268.

It belongs to the ferrochelatase family.

It localises to the cytoplasm. The enzyme catalyses Fe-coproporphyrin III + 2 H(+) = coproporphyrin III + Fe(2+). It functions in the pathway porphyrin-containing compound metabolism; protoheme biosynthesis. In terms of biological role, involved in coproporphyrin-dependent heme b biosynthesis. Catalyzes the insertion of ferrous iron into coproporphyrin III to form Fe-coproporphyrin III. This chain is Coproporphyrin III ferrochelatase, found in Lactococcus lactis subsp. cremoris (strain MG1363).